Consider the following 205-residue polypeptide: Gap junction epsilon-1 protein (205 aa).

Residues 1 to 23 lie on the Cytoplasmic side of the membrane; that stretch reads MSLNYIKNFYEGCVKPPTVIGQF. Residues 24-44 form a helical membrane-spanning segment; that stretch reads HTLFFGSIRIFFLGVLGFAVY. Residues 45–76 lie on the Extracellular side of the membrane; sequence GNEALHFICDPDKREVNLFCYNQFRPITPQVS. 2 cysteine pairs are disulfide-bonded: Cys53/Cys161 and Cys64/Cys148. The chain crosses the membrane as a helical span at residues 77-97; sequence FSALQLVIVLVPGALFHLYAA. Topologically, residues 98-112 are cytoplasmic; it reads CKSINQECILQKPIY. Residues 113 to 133 traverse the membrane as a helical segment; the sequence is TIIYILSVLLRISLAAIAFWL. The Extracellular portion of the chain corresponds to 134 to 170; sequence QIYLFGFQVKSLYLCDARSLGENMIIRCMVPEHFEKT. Residues 171–191 form a helical membrane-spanning segment; it reads IFLIAINTFTTITILLFVAEI. At 192 to 205 the chain is on the cytoplasmic side; the sequence is FEIIFRRLYFPFRQ.

The protein belongs to the connexin family. Beta-type (group I) subfamily. As to quaternary structure, a connexon is composed of a hexamer of connexins. As to expression, not detected in lens or retina.

It is found in the cell membrane. Mediates calcium-independent ATP release, suggesting activity as a hemichannel. Does not form functional gap junctions. The protein is Gap junction epsilon-1 protein (GJE1) of Homo sapiens (Human).